The chain runs to 371 residues: Putative F-box/kelch-repeat protein At3g10510 (371 aa).

Residues 13–61 (SVMTSIPDDVIMECIAPRVPRYNHSMLSLVSKQFRSLVASPRLYKTRSL) form the F-box domain. Kelch repeat units lie at residues 123-165 (NIFV…DMPV), 178-229 (KIYI…GPSS), and 257-305 (NECV…YIVS).

This Arabidopsis thaliana (Mouse-ear cress) protein is Putative F-box/kelch-repeat protein At3g10510.